Consider the following 434-residue polypeptide: MQVRRDDDGAGGCAGDAVPGGGEGQDGVPARQPAGRVWGVSRAARATSGFKVLALGPETTGVIQRMQQLLDMDTTPFTDKIIAEYIWVGGSGIDLRSKSRTISKPVEDPSELPKWNYDGSSTGQAPGEDSEVILYPQAIFKDPFRGGNNILVICDTYTPQGEPIPTNKRHMAAQIFSDPKVTSQVPWFGIEQEYTLMQRDVNWPLGWPVGGYPGPQGPYYCAVGSDKSFGRDISDAHYKACLYAGIEISGTNGEVMPGQWEYQVGPSVGIDAGDHIWASRYILERITEQAGVVLTLDPKPIQGDWNGAGCHTNYSTLSMREDGGFDVIKKAILNLSLRHDLHIAAYGEGNERRLTGLHETASISDFSWGVANRGCSIRVGRDTEAKGKGYLEDRRPASNMDPYTVTALLAETTILWEPTLEAEALAAKKLALKV.

Disordered regions lie at residues 1–33 (MQVR…ARQP) and 101–126 (TISK…GQAP). The N-terminal 54 residues, 1 to 54 (MQVRRDDDGAGGCAGDAVPGGGEGQDGVPARQPAGRVWGVSRAARATSGFKVLA), are a transit peptide targeting the chloroplast. Residues 10-25 (AGGCAGDAVPGGGEGQ) show a composition bias toward gly residues. One can recognise a GS beta-grasp domain in the interval 81-161 (IIAEYIWVGG…VICDTYTPQG (81 aa)). Positions 168-434 (KRHMAAQIFS…LAAKKLALKV (267 aa)) constitute a GS catalytic domain.

This sequence belongs to the glutamine synthetase family. As to quaternary structure, homooctamer.

The protein resides in the plastid. Its subcellular location is the chloroplast. The enzyme catalyses L-glutamate + NH4(+) + ATP = L-glutamine + ADP + phosphate + H(+). Functionally, the light-modulated chloroplast enzyme, encoded by a nuclear gene and expressed primarily in leaves, is responsible for the reassimilation of the ammonia generated by photorespiration. The chain is Glutamine synthetase leaf isozyme, chloroplastic from Hordeum vulgare (Barley).